The following is a 283-amino-acid chain: Pantothenate synthetase (283 aa).

30–37 (MGNLHDGH) serves as a coordination point for ATP. The Proton donor role is filled by H37. Q61 is a (R)-pantoate binding site. Q61 lines the beta-alanine pocket. 149–152 (GEKD) serves as a coordination point for ATP. Residue Q155 coordinates (R)-pantoate. ATP is bound by residues M178 and 186–189 (LSSR).

The protein belongs to the pantothenate synthetase family. In terms of assembly, homodimer.

The protein resides in the cytoplasm. The catalysed reaction is (R)-pantoate + beta-alanine + ATP = (R)-pantothenate + AMP + diphosphate + H(+). Its pathway is cofactor biosynthesis; (R)-pantothenate biosynthesis; (R)-pantothenate from (R)-pantoate and beta-alanine: step 1/1. With respect to regulation, activation requires a combination of a divalent cation, magnesium or manganese, and a monovalent cation, potassium or ammonium. Above the optimum concentration for activation, magnesium and manganese are rather inhibitory. Also activated by 2-mercaptoethanol, dithiothreitol, cysteine and glutathione. Inhibited by divalent cations (mercury, cobalt, zinc, copper, silver), chelating agents (EDTA, EGTA and o-phenanthroline), and analogs of beta-alanine (taurine, gamma-aminobutyrate, gamma-amino-beta-hydroxybutyrate). In terms of biological role, catalyzes the condensation of pantoate with beta-alanine in an ATP-dependent reaction via a pantoyl-adenylate intermediate. This Escherichia coli (strain K12) protein is Pantothenate synthetase (panC).